The chain runs to 514 residues: ATP synthase subunit alpha (514 aa).

Position 170–177 (170–177) interacts with ATP; it reads GDRQTGKT.

It belongs to the ATPase alpha/beta chains family. F-type ATPases have 2 components, CF(1) - the catalytic core - and CF(0) - the membrane proton channel. CF(1) has five subunits: alpha(3), beta(3), gamma(1), delta(1), epsilon(1). CF(0) has three main subunits: a(1), b(2) and c(9-12). The alpha and beta chains form an alternating ring which encloses part of the gamma chain. CF(1) is attached to CF(0) by a central stalk formed by the gamma and epsilon chains, while a peripheral stalk is formed by the delta and b chains.

The protein localises to the cell inner membrane. It catalyses the reaction ATP + H2O + 4 H(+)(in) = ADP + phosphate + 5 H(+)(out). Functionally, produces ATP from ADP in the presence of a proton gradient across the membrane. The alpha chain is a regulatory subunit. The polypeptide is ATP synthase subunit alpha (Psychrobacter sp. (strain PRwf-1)).